Here is a 351-residue protein sequence, read N- to C-terminus: MESNYSIHLNGSEVVVYDSTISRVLWILSMVVVSITFFLGVLGNGLVIWVAGFRMPHTVTTIWYLNLALADFSFTATLPFLLVEMAMKEKWPFGWFLCKLVHIVVDVNLFGSVFLIALIALDRCICVLHPVWAQNHRTVSLARKVVVGPWIFALILTLPIFIFLTTVRIPGGDVYCTFNFGSWAQTDEEKLNTAITFVTTRGIIRFLIGFSMPMSIVAVCYGLIAVKINRRNLVNSSRPLRVLTAVVASFFICWFPFQLVALLGTVWFKETLLSGSYKILDMFVNPTSSLAYFNSCLNPMLYVFMGQDFRERFIHSLPYSLERALSEDSGQTSDSSTSSTSPPADIELKAP.

The Extracellular portion of the chain corresponds to 1–29 (MESNYSIHLNGSEVVVYDSTISRVLWILS). N-linked (GlcNAc...) asparagine glycans are attached at residues asparagine 4 and asparagine 10. The chain crosses the membrane as a helical span at residues 30-50 (MVVVSITFFLGVLGNGLVIWV). Residues 51-61 (AGFRMPHTVTT) lie on the Cytoplasmic side of the membrane. A helical membrane pass occupies residues 62-82 (IWYLNLALADFSFTATLPFLL). The Extracellular portion of the chain corresponds to 83-99 (VEMAMKEKWPFGWFLCK). Cysteine 98 and cysteine 176 form a disulfide bridge. A helical transmembrane segment spans residues 100–120 (LVHIVVDVNLFGSVFLIALIA). Over 121-144 (LDRCICVLHPVWAQNHRTVSLARK) the chain is Cytoplasmic. The chain crosses the membrane as a helical span at residues 145–165 (VVVGPWIFALILTLPIFIFLT). Topologically, residues 166–205 (TVRIPGGDVYCTFNFGSWAQTDEEKLNTAITFVTTRGIIR) are extracellular. The chain crosses the membrane as a helical span at residues 206 to 226 (FLIGFSMPMSIVAVCYGLIAV). Over 227–241 (KINRRNLVNSSRPLR) the chain is Cytoplasmic. Residues 242–262 (VLTAVVASFFICWFPFQLVAL) traverse the membrane as a helical segment. The Extracellular portion of the chain corresponds to 263–282 (LGTVWFKETLLSGSYKILDM). The chain crosses the membrane as a helical span at residues 283 to 305 (FVNPTSSLAYFNSCLNPMLYVFM). Residues 306-351 (GQDFRERFIHSLPYSLERALSEDSGQTSDSSTSSTSPPADIELKAP) are Cytoplasmic-facing. Residues 325-351 (LSEDSGQTSDSSTSSTSPPADIELKAP) form a disordered region. Over residues 327–341 (EDSGQTSDSSTSSTS) the composition is skewed to low complexity.

The protein belongs to the G-protein coupled receptor 1 family. Interacts with Amyloid-beta protein 42, product of APP; the interaction takes place at the cell surface and the complex is then rapidly internalized. In terms of tissue distribution, primarily expressed in neutrophils. Not detected in vomeronasal neurons.

The protein localises to the cell membrane. In terms of biological role, high affinity receptor for N-formyl-methionyl peptides (FMLP), which are powerful neutrophil chemotactic factors. Stimulates chemotaxis in immune cells to site of infection or tissue damage upon recognition of several ligands, such as FMLP, or ligand involved in cell damage, disease or inflammation. Receptor for the chemokine-like protein FAM19A5, mediating FAM19A5-stimulated macrophage chemotaxis and the inhibitory effect on TNFSF11/RANKL-induced osteoclast differentiation. The chain is Formyl peptide receptor 2 (Fpr2) from Mus musculus (Mouse).